The chain runs to 319 residues: GTPase Era (319 aa).

In terms of domain architecture, Era-type G spans 9 to 196 (RSGVSLIIGR…MRTLRDLLPE (188 aa)). The segment at 17-24 (GRPSSGKS) is G1. A GTP-binding site is contributed by 17-24 (GRPSSGKS). The segment at 43 to 47 (QTTRN) is G2. Residues 64 to 67 (DTPG) form a G3 region. GTP is bound by residues 64-68 (DTPGY) and 127-130 (NKVD). The tract at residues 127–130 (NKVD) is G4. Residues 175–177 (ISA) form a G5 region. One can recognise a KH type-2 domain in the interval 227 to 303 (CRDELPHALY…HISLDIRVKV (77 aa)).

Belongs to the TRAFAC class TrmE-Era-EngA-EngB-Septin-like GTPase superfamily. Era GTPase family. In terms of assembly, monomer.

The protein resides in the cytoplasm. It localises to the cell inner membrane. Functionally, an essential GTPase that binds both GDP and GTP, with rapid nucleotide exchange. Plays a role in 16S rRNA processing and 30S ribosomal subunit biogenesis and possibly also in cell cycle regulation and energy metabolism. This is GTPase Era from Treponema pallidum (strain Nichols).